The sequence spans 237 residues: Proteasome subunit alpha type-5-B (237 aa).

M1 is modified (N-acetylmethionine). Residues K43, K66, and K185 each participate in a glycyl lysine isopeptide (Lys-Gly) (interchain with G-Cter in ubiquitin) cross-link.

The protein belongs to the peptidase T1A family. Component of the 20S core complex of the 26S proteasome. The 26S proteasome is composed of a core protease (CP), known as the 20S proteasome, capped at one or both ends by the 19S regulatory particle (RP/PA700). The 20S proteasome core is composed of 28 subunits that are arranged in four stacked rings, resulting in a barrel-shaped structure. The two end rings are each formed by seven alpha subunits, and the two central rings are each formed by seven beta subunits. The catalytic chamber with the active sites is on the inside of the barrel.

The protein resides in the cytoplasm. The protein localises to the nucleus. Its function is as follows. The proteasome is a multicatalytic proteinase complex which is characterized by its ability to cleave peptides with Arg, Phe, Tyr, Leu, and Glu adjacent to the leaving group at neutral or slightly basic pH. The proteasome has an ATP-dependent proteolytic activity. The sequence is that of Proteasome subunit alpha type-5-B (PAE2) from Arabidopsis thaliana (Mouse-ear cress).